Here is a 351-residue protein sequence, read N- to C-terminus: Nicotinate-nucleotide--dimethylbenzimidazole phosphoribosyltransferase (351 aa).

Residue Glu317 is the Proton acceptor of the active site.

The protein belongs to the CobT family.

The enzyme catalyses 5,6-dimethylbenzimidazole + nicotinate beta-D-ribonucleotide = alpha-ribazole 5'-phosphate + nicotinate + H(+). Its pathway is nucleoside biosynthesis; alpha-ribazole biosynthesis; alpha-ribazole from 5,6-dimethylbenzimidazole: step 1/2. Its function is as follows. Catalyzes the synthesis of alpha-ribazole-5'-phosphate from nicotinate mononucleotide (NAMN) and 5,6-dimethylbenzimidazole (DMB). The polypeptide is Nicotinate-nucleotide--dimethylbenzimidazole phosphoribosyltransferase (Bradyrhizobium sp. (strain ORS 278)).